The chain runs to 451 residues: Serine--tRNA ligase, cytoplasmic (451 aa).

Cysteine 213 and cysteine 244 form a disulfide bridge. 238–240 (TAE) contributes to the L-serine binding site. ATP contacts are provided by residues 269 to 271 (RKE) and valine 285. Residue glutamate 292 participates in L-serine binding. 358–361 (ELVS) serves as a coordination point for ATP. Residue threonine 396 participates in L-serine binding.

It belongs to the class-II aminoacyl-tRNA synthetase family. Type-1 seryl-tRNA synthetase subfamily. As to quaternary structure, homodimer. The tRNA molecule binds across the dimer.

It is found in the cytoplasm. Its subcellular location is the cytosol. The catalysed reaction is tRNA(Ser) + L-serine + ATP = L-seryl-tRNA(Ser) + AMP + diphosphate + H(+). Catalyzes the attachment of serine to tRNA(Ser) in a two-step reaction: serine is first activated by ATP to form Ser-AMP and then transferred to the acceptor end of tRNA(Ser). The polypeptide is Serine--tRNA ligase, cytoplasmic (Arabidopsis thaliana (Mouse-ear cress)).